A 236-amino-acid polypeptide reads, in one-letter code: uncharacterized protein (236 aa).

The RPE1 insert domain occupies 117–160 (RYLSKQTDRNEFITTAESYIGISKHKSTNITYKLPLKEQFCNMS).

This is an uncharacterized protein from Rickettsia prowazekii (strain Madrid E).